The chain runs to 535 residues: Ribonuclease Y (535 aa).

A helical membrane pass occupies residues 4–24 (IILLIVSALIGLILGYALISI). The segment at 118–141 (ENLSSKEKVLDSKEQSLTDKSKHI) is disordered. The 61-residue stretch at 225-285 (TITSVHLPDD…IRREIARMTL (61 aa)) folds into the KH domain. An HD domain is found at 351-444 (VLRHSVEVGK…VAAADALSSA (94 aa)).

Belongs to the RNase Y family.

It is found in the cell membrane. In terms of biological role, endoribonuclease that initiates mRNA decay. The chain is Ribonuclease Y from Streptococcus pyogenes serotype M2 (strain MGAS10270).